The following is a 620-amino-acid chain: Chaperone protein HscA homolog (620 aa).

This sequence belongs to the heat shock protein 70 family.

Its function is as follows. Chaperone involved in the maturation of iron-sulfur cluster-containing proteins. Has a low intrinsic ATPase activity which is markedly stimulated by HscB. This Shewanella loihica (strain ATCC BAA-1088 / PV-4) protein is Chaperone protein HscA homolog.